The sequence spans 159 residues: Cyclic pyranopterin monophosphate synthase (159 aa).

Substrate is bound by residues 75–77 (LCH) and 113–114 (ME). D128 is an active-site residue.

This sequence belongs to the MoaC family. Homohexamer; trimer of dimers.

The catalysed reaction is (8S)-3',8-cyclo-7,8-dihydroguanosine 5'-triphosphate = cyclic pyranopterin phosphate + diphosphate. The protein operates within cofactor biosynthesis; molybdopterin biosynthesis. In terms of biological role, catalyzes the conversion of (8S)-3',8-cyclo-7,8-dihydroguanosine 5'-triphosphate to cyclic pyranopterin monophosphate (cPMP). This is Cyclic pyranopterin monophosphate synthase from Vibrio atlanticus (strain LGP32) (Vibrio splendidus (strain Mel32)).